Consider the following 914-residue polypeptide: WAG22 antigen (914 aa).

The PE domain occupies 1–93 (MSFVIAVPET…GGAYAAAEAA (93 aa)). Disordered stretches follow at residues 412–431 (GGSG…AGGA) and 895–914 (AGAG…HGLT). A compositionally biased stretch (gly residues) spans 895–904 (AGAGGAGGLV).

Belongs to the mycobacterial PE family. PGRS subfamily.

This is WAG22 antigen (wag22) from Mycobacterium bovis (strain ATCC BAA-935 / AF2122/97).